Consider the following 140-residue polypeptide: ATP synthase epsilon chain (140 aa).

Belongs to the ATPase epsilon chain family. In terms of assembly, F-type ATPases have 2 components, CF(1) - the catalytic core - and CF(0) - the membrane proton channel. CF(1) has five subunits: alpha(3), beta(3), gamma(1), delta(1), epsilon(1). CF(0) has three main subunits: a, b and c.

It localises to the cell inner membrane. Functionally, produces ATP from ADP in the presence of a proton gradient across the membrane. The chain is ATP synthase epsilon chain from Chromobacterium violaceum (strain ATCC 12472 / DSM 30191 / JCM 1249 / CCUG 213 / NBRC 12614 / NCIMB 9131 / NCTC 9757 / MK).